We begin with the raw amino-acid sequence, 492 residues long: Nuclear hormone receptor family member nhr-4 (492 aa).

A DNA-binding region (nuclear receptor) is located at residues 47 to 122 (RLICDVCGDV…VGMNPDSVQN (76 aa)). 2 NR C4-type zinc fingers span residues 50–70 (CDVC…CNGC) and 86–110 (CRFG…LKKC). Positions 121–143 (QNERDRNAKNGGMGGPMSSPTQS) are disordered. The NR LBD domain maps to 215 to 481 (MDFSIHSAVL…ELIQATHKTT (267 aa)).

The protein belongs to the nuclear hormone receptor family.

It localises to the nucleus. Functionally, orphan nuclear receptor. This chain is Nuclear hormone receptor family member nhr-4 (nhr-4), found in Caenorhabditis elegans.